An 85-amino-acid polypeptide reads, in one-letter code: Large ribosomal subunit protein bL27 (85 aa).

Belongs to the bacterial ribosomal protein bL27 family.

This is Large ribosomal subunit protein bL27 from Xylella fastidiosa (strain 9a5c).